Reading from the N-terminus, the 192-residue chain is Mitochondrial import inner membrane translocase subunit Tim22 (192 aa).

2 disulfides stabilise this stretch: Cys-67–Cys-139 and Cys-158–Cys-177. The next 3 helical transmembrane spans lie at 72–92, 123–141, and 168–188; these read VLACVGGFVLGGAFGVFTAGI, YAKNFAIVGAMFSCTECLV, and AGVKAGAIGCGGFAAFSAAID.

It belongs to the Tim17/Tim22/Tim23 family. Component of the TIM22 complex, whose core is composed of TIMM22, associated with peripheral protein FXC1/TIMM10B and the 70 kDa heterohexamer. In most cases, the 70 kDa complex is composed of TIMM9 and TIMM10 (TIMM10A or TIMM10B). A small fraction of the 70 kDa complex is composed of TIMM8 (TIMM8A/DDP1 or TIMM8B/DDP2) and TIMM13. The TIM22 complex also contains AGK and TIMM29. Interacts directly with TIMM9, TIMM10A and FXC1/TIMM10B. Interacts (when oxidized) with TIMM29; interaction is direct. Disulfide bonds promote efficient assembly of the TIM22 complex.

It localises to the mitochondrion inner membrane. In terms of biological role, essential core component of the TIM22 complex, a complex that mediates the import and insertion of multi-pass transmembrane proteins into the mitochondrial inner membrane. In the TIM22 complex, it constitutes the voltage-activated and signal-gated channel. Forms a twin-pore translocase that uses the membrane potential as external driving force in 2 voltage-dependent steps. The polypeptide is Mitochondrial import inner membrane translocase subunit Tim22 (Timm22) (Rattus norvegicus (Rat)).